An 81-amino-acid polypeptide reads, in one-letter code: ATP synthase subunit c (81 aa).

2 helical membrane passes run 5-25 and 57-77; these read IAAGALIGGGLIMAGGAIGAG and VGLVEAAYFINLAFMALFVFA.

It belongs to the ATPase C chain family. In terms of assembly, F-type ATPases have 2 components, F(1) - the catalytic core - and F(0) - the membrane proton channel. F(1) has five subunits: alpha(3), beta(3), gamma(1), delta(1), epsilon(1). F(0) has three main subunits: a(1), b(2) and c(10-14). The alpha and beta chains form an alternating ring which encloses part of the gamma chain. F(1) is attached to F(0) by a central stalk formed by the gamma and epsilon chains, while a peripheral stalk is formed by the delta and b chains.

Its subcellular location is the cell membrane. In terms of biological role, f(1)F(0) ATP synthase produces ATP from ADP in the presence of a proton or sodium gradient. F-type ATPases consist of two structural domains, F(1) containing the extramembraneous catalytic core and F(0) containing the membrane proton channel, linked together by a central stalk and a peripheral stalk. During catalysis, ATP synthesis in the catalytic domain of F(1) is coupled via a rotary mechanism of the central stalk subunits to proton translocation. Key component of the F(0) channel; it plays a direct role in translocation across the membrane. A homomeric c-ring of between 10-14 subunits forms the central stalk rotor element with the F(1) delta and epsilon subunits. The sequence is that of ATP synthase subunit c from Mycobacterium bovis (strain ATCC BAA-935 / AF2122/97).